Consider the following 191-residue polypeptide: Programmed cell death protein 6 (191 aa).

A2 carries the post-translational modification N-acetylalanine. EF-hand domains follow at residues 23–58 (PDQS…GTWT), 59–89 (PFNP…TGVW), 90–125 (KYIT…FGYR), 126–161 (LSDQ…LQRL), and 162–191 (TDIF…FSIV). Ca(2+) contacts are provided by D36, D38, S40, V42, and E47. D103, D105, S107, M109, and E114 together coordinate Ca(2+). Mg(2+)-binding residues include D169, D171, D173, and W175.

Homodimer and heterodimer; heterodimerizes (via the EF-hand 5) with PEF1. Isoform 1 and isoform 2 self-associate; probably forming homodimers. Interacts with CPNE4 (via VWFA domain). Interacts with PDCD6IP; the interaction is calcium-dependent. Interacts with RBM22. Interacts with PLSCR4. Interacts with ANXA7 and TSG101. Interacts with DAPK1. Interacts with SEC31A; the interaction is calcium-dependent and promotes monoubiquitination of SEC31A. Interacts with ANXA11 (via N-terminus); the interaction is calcium-dependent. Interacts with PLSCR3 (via N-terminus); the interaction is calcium-dependent. Interacts with MCOLN1; the interaction is calcium-dependent. Interacts with KDR; the interaction is calcium-dependent. Interacts with HEBP2; the interaction is calcium-dependent. Interacts with TFG. Isoform 1: Interacts with SHISA5, leading to stabilize it. Isoform 2: Does not interact with SHISA5. Isoform 2: Does not interact with PDCD6IP, TSG101, ANXA7 and ANXA11.

It localises to the endoplasmic reticulum membrane. The protein resides in the cytoplasmic vesicle. Its subcellular location is the COPII-coated vesicle membrane. It is found in the cytoplasm. The protein localises to the nucleus. It localises to the endosome. Calcium sensor that plays a key role in processes such as endoplasmic reticulum (ER)-Golgi vesicular transport, endosomal biogenesis or membrane repair. Acts as an adapter that bridges unrelated proteins or stabilizes weak protein-protein complexes in response to calcium: calcium-binding triggers exposure of apolar surface, promoting interaction with different sets of proteins thanks to 3 different hydrophobic pockets, leading to translocation to membranes. Involved in ER-Golgi transport by promoting the association between PDCD6IP and TSG101, thereby bridging together the ESCRT-III and ESCRT-I complexes. Together with PEF1, acts as a calcium-dependent adapter for the BCR(KLHL12) complex, a complex involved in ER-Golgi transport by regulating the size of COPII coats. In response to cytosolic calcium increase, the heterodimer formed with PEF1 interacts with, and bridges together the BCR(KLHL12) complex and SEC31 (SEC31A or SEC31B), promoting monoubiquitination of SEC31 and subsequent collagen export, which is required for neural crest specification. Involved in the regulation of the distribution and function of MCOLN1 in the endosomal pathway. Promotes localization and polymerization of TFG at endoplasmic reticulum exit site. Required for T-cell receptor-, Fas-, and glucocorticoid-induced apoptosis. May mediate Ca(2+)-regulated signals along the death pathway: interaction with DAPK1 can accelerate apoptotic cell death by increasing caspase-3 activity. Its role in apoptosis may however be indirect, as suggested by knockout experiments. May inhibit KDR/VEGFR2-dependent angiogenesis; the function involves inhibition of VEGF-induced phosphorylation of the Akt signaling pathway. In terms of biological role, has a lower Ca(2+) affinity than isoform 1. This chain is Programmed cell death protein 6 (Pdcd6), found in Mus musculus (Mouse).